Reading from the N-terminus, the 326-residue chain is Polycomb complex protein BMI-1 (326 aa).

The RING-type zinc-finger motif lies at 18–57 (CVLCGGYFIDATTIIECLHSFCKTCIVRYLETSKYCPICD). The short motif at 81-95 (KLVPGLFKNEMKRRR) is the Nuclear localization signal element. An interaction with PHC2 region spans residues 162–182 (RYLRCPAAMTVMHLRKFLRSK). Residues 164 to 228 (LRCPAAMTVM…GPLPLKYRVR (65 aa)) are interaction with E4F1. A disordered region spans residues 236-326 (IGHQREGLSN…INGSSATSSG (91 aa)). A compositionally biased stretch (low complexity) spans 265–278 (LPSTSSCLPSPSTP). Positions 279–310 (VQSPHPQFPHISSTMNGTSSSPGSNHQSSFTN) are enriched in polar residues. The segment covering 315-326 (SSINGSSATSSG) has biased composition (low complexity).

As to quaternary structure, component of a PRC1-like complex.

The protein localises to the nucleus. The protein resides in the cytoplasm. In terms of biological role, component of a Polycomb group (PcG) multiprotein PRC1-like complex, a complex class required to maintain the transcriptionally repressive state of many genes, including Hox genes, throughout development. PcG PRC1 complex acts via chromatin remodeling and modification of histones; it mediates monoubiquitination of histone H2A 'Lys-119', rendering chromatin heritably changed in its expressibility. In the PRC1-like complex, regulates the E3 ubiquitin-protein ligase activity of RNF2/RING2. This chain is Polycomb complex protein BMI-1 (BMI1), found in Gallus gallus (Chicken).